The sequence spans 466 residues: Glucose-6-phosphate 1-dehydrogenase 1 (466 aa).

Residues Ser48, 88 to 89, and Lys141 each bind NADP(+); that span reads DV. Residues His171, Lys175, Glu209, and Asp228 each contribute to the substrate site. Residue His233 is the Proton acceptor of the active site. Substrate is bound by residues Lys319 and Lys324.

This sequence belongs to the glucose-6-phosphate dehydrogenase family.

The catalysed reaction is D-glucose 6-phosphate + NADP(+) = 6-phospho-D-glucono-1,5-lactone + NADPH + H(+). It participates in carbohydrate degradation; pentose phosphate pathway; D-ribulose 5-phosphate from D-glucose 6-phosphate (oxidative stage): step 1/3. Catalyzes the oxidation of glucose 6-phosphate to 6-phosphogluconolactone. In Mycobacterium tuberculosis (strain ATCC 25618 / H37Rv), this protein is Glucose-6-phosphate 1-dehydrogenase 1.